We begin with the raw amino-acid sequence, 388 residues long: Outer membrane protein assembly factor BamB (388 aa).

Positions 1–17 are cleaved as a signal peptide; that stretch reads MVLSLLSVMLLSGYKFL.

The protein belongs to the BamB family. As to quaternary structure, part of the Bam complex, which is composed of the outer membrane protein BamA, and four lipoproteins BamB, BamC, BamD and BamE.

It is found in the cell outer membrane. Its function is as follows. Part of the outer membrane protein assembly complex, which is involved in assembly and insertion of beta-barrel proteins into the outer membrane. In Moranella endobia (strain PCIT), this protein is Outer membrane protein assembly factor BamB.